We begin with the raw amino-acid sequence, 239 residues long: Small ribosomal subunit protein uS5 (239 aa).

The disordered stretch occupies residues 1–62 (MADETEIQAA…DDRRGSEEQG (62 aa)). Over residues 9-19 (AAAPAEAAPGA) the composition is skewed to low complexity. Residues 34–62 (GGNDRGGDRGRGRDGRGRRDDRRGSEEQG) are compositionally biased toward basic and acidic residues. The region spanning 65 to 128 (LIEKLVHINR…AAAKKAMVRV (64 aa)) is the S5 DRBM domain.

The protein belongs to the universal ribosomal protein uS5 family. In terms of assembly, part of the 30S ribosomal subunit. Contacts proteins S4 and S8.

In terms of biological role, with S4 and S12 plays an important role in translational accuracy. Functionally, located at the back of the 30S subunit body where it stabilizes the conformation of the head with respect to the body. In Rhizorhabdus wittichii (strain DSM 6014 / CCUG 31198 / JCM 15750 / NBRC 105917 / EY 4224 / RW1) (Sphingomonas wittichii), this protein is Small ribosomal subunit protein uS5.